A 416-amino-acid polypeptide reads, in one-letter code: MFKLAQRLPKSVSSLGSQLSKNAPNQLAAATTSQLINTPGIRHKSRSSAVPSSLSKSMYDHNEEMKAAMKYMDEIYPEVMGQIEKVPQYEEIKPILVRLREAIDYTVPYGKRFKGVHIVSHFKLLADPKFITPENVKLSGVLGWCAEIIQAYFCMLDDIMDDSDTRRGKPTWYKLPGIGLNAVTDVCLMEMFTFELLKRYFPKHPSYADIHEILRNLLFLTHMGQGYDFTFIDPVTRKINFNDFTEENYTKLCRYKIIFSTFHNTLELTSAMANVYDPKKIKQLDPVLMRIGMMHQSQNDFKDLYRDQGEVLKQAEKSVLGTDIKTGQLTWFAQKALSICNDRQRKIIMDNYGKEDNKNSEAVREVYEELDLKGKFMEFEEESFEWLKKEIPKINNGIPHKVFQDYTYGVFKRRPE.

Mg(2+) contacts are provided by D157 and D161. Residues D157 to D161 carry the DDXXD motif motif.

This sequence belongs to the FPP/GGPP synthase family. Mg(2+) serves as cofactor. As to expression, specifically expressed in the anterior midgut of male beetles, the site of aggregation pheromone biosynthesis.

The catalysed reaction is isopentenyl diphosphate + dimethylallyl diphosphate = (2E)-geranyl diphosphate + diphosphate. Its pathway is pheromone biosynthesis. Functionally, geranyl diphosphate synthase involved in pheromone biosynthesis. The sequence is that of Geranyl diphosphate synthase from Ips pini (Pine engraver beetle).